The sequence spans 396 residues: E3 ubiquitin-protein ligase NHLRC1 (396 aa).

The segment at 23 to 69 (CKVCFERFGHRQQRRPRNLPCGHVVCLACVAALAHPRTLALECPFCR) adopts an RING-type zinc-finger fold. 6 NHL repeats span residues 110–154 (ALTC…FDSG), 158–201 (AHQF…FDFF), 202–242 (GQIK…LEAD), 245–298 (EGVL…FNSS), 299–347 (MQLI…LGKP), and 348–391 (EEFP…FKVM).

As to quaternary structure, interacts with AGL. Interacts (via the NHL repeats) with EPM2A/laforin. Forms a complex with EPM2A/laforin and HSP70.

Its subcellular location is the endoplasmic reticulum. It localises to the nucleus. It carries out the reaction S-ubiquitinyl-[E2 ubiquitin-conjugating enzyme]-L-cysteine + [acceptor protein]-L-lysine = [E2 ubiquitin-conjugating enzyme]-L-cysteine + N(6)-ubiquitinyl-[acceptor protein]-L-lysine.. The protein operates within protein modification; protein ubiquitination. E3 ubiquitin-protein ligase. Together with the phosphatase EPM2A/laforin, appears to be involved in the clearance of toxic polyglucosan and protein aggregates via multiple pathways. In complex with EPM2A/laforin and HSP70, suppresses the cellular toxicity of misfolded proteins by promoting their degradation through the ubiquitin-proteasome system (UPS). Ubiquitinates the glycogen-targeting protein phosphatase subunits PPP1R3C/PTG and PPP1R3D in a laforin-dependent manner and targets them for proteasome-dependent degradation, thus decreasing glycogen accumulation. Polyubiquitinates EPM2A/laforin and ubiquitinates AGL and targets them for proteasome-dependent degradation. Also promotes proteasome-independent protein degradation through the macroautophagy pathway. In Rattus norvegicus (Rat), this protein is E3 ubiquitin-protein ligase NHLRC1 (Nhlrc1).